Reading from the N-terminus, the 312-residue chain is Pyrimidine-specific ribonucleoside hydrolase RihA (312 aa).

Histidine 240 is an active-site residue.

It belongs to the IUNH family. RihA subfamily.

Its function is as follows. Hydrolyzes cytidine or uridine to ribose and cytosine or uracil, respectively. The protein is Pyrimidine-specific ribonucleoside hydrolase RihA of Shewanella woodyi (strain ATCC 51908 / MS32).